We begin with the raw amino-acid sequence, 1107 residues long: Miniconductance mechanosensitive channel MscM (1107 aa).

Positions 1-19 are cleaved as a signal peptide; the sequence is MRLIITFLMAWCLSWGAYA. A run of 11 helical transmembrane segments spans residues 467–487, 522–542, 551–571, 600–620, 628–648, 674–694, 698–718, 785–805, 828–848, 875–895, and 910–930; these read VMML…ILVG, LFWS…LGYG, LAVA…VVMI, YLMS…FDNL, SLGR…TLSL, MMIG…LATA, LARL…YHVI, ILML…HSAF, PITL…TQLV, TITK…MIGI, and GLGF…IILF.

The protein belongs to the MscS (TC 1.A.23) family. Homoheptamer.

The protein localises to the cell inner membrane. Functionally, mechanosensitive channel that protects cells against hypoosmotic stress when highly overexpressed. Gates spontaneously in response to increased membrane tension. In Escherichia coli (strain K12), this protein is Miniconductance mechanosensitive channel MscM (mscM).